Consider the following 318-residue polypeptide: Isoflavone reductase (318 aa).

Residues 11 to 17 (GPTGAIG), R36, and K44 each bind NADP(+). The Proton acceptor role is filled by K144. Position 148 (R148) interacts with NADP(+).

Belongs to the NmrA-type oxidoreductase family. Isoflavone reductase subfamily.

It carries out the reaction (3R)-vestitone + NADP(+) = 2'-hydroxyformononetin + NADPH + 2 H(+). It participates in phytoalexin biosynthesis; pterocarpan phytoalexin biosynthesis. Reduces achiral isoflavones to chiral isoflavanones during the biosynthesis of chiral pterocarpan phytoalexins. The protein is Isoflavone reductase (IFR) of Cicer arietinum (Chickpea).